Reading from the N-terminus, the 84-residue chain is Cell division topological specificity factor (84 aa).

The protein belongs to the MinE family.

Functionally, prevents the cell division inhibition by proteins MinC and MinD at internal division sites while permitting inhibition at polar sites. This ensures cell division at the proper site by restricting the formation of a division septum at the midpoint of the long axis of the cell. The protein is Cell division topological specificity factor of Desulfotalea psychrophila (strain LSv54 / DSM 12343).